A 1091-amino-acid chain; its full sequence is MPRGKSASGGSTAAGPGPGRQTVLSRFFRSAGSLRSSASSTEPAEKVTEGDSRKRSLGNGGPTKKKARKVPEKEEENISVASHHPEAKKCLRPRIVLKSLEKLKEFCCDSALPQNRVQTEALRERLEVLPRCTDFEDITLQRAKNAVLSEDSKSQANQKDSQFGPCPEVFQKTSDCKPFNKRSKSVYTPLELQYLDMKQQHKDAVLCVECGYKYRFFGEDAEIAARELNIYCHLDHNFMTASIPTHRLFVHVRRLVAKGYKVGVVKQTETAALKAIGDNKSSVFSRKLTALYTKSTLIGEDVNPLIRLDDSVNIDEVMTDTSTNYLLCIYEEKENIKDKKKGNLSVGVVGVQPATGEVVFDCFQDSASRLELETRISSLQPVELLLPSDLSEPTEMLIQRATNVSVRDDRIRVERMNNTYFEYSHAFQTVTEFYAREIVDSQGSQSLSGVINLEKPVICALAAVIRYLKEFNLEKMLSKPESFKQLSSGMEFMRINGTTLRNLEMVQNQTDMKTKGSLLWVLDHTKTSFGRRKLKNWVTQPLLKLREINARLDAVSDVLHSESSVFEQIENLLRKLPDVERGLCSIYHKKCSTQEFFLIVKSLCQLKSELQALMPAVNSHVQSDLLRALIVELLSPVEHYLKVLNGPAAKVGDKTELFKDLSDFPLIKKRKNEIQEVIHSIQMRLQEFRKILKLPSLQYVTVSGQEFMIEIKNSAVSCIPADWVKVGSTKAVSRFHPPFIVESYRRLNQLREQLVLDCNAEWLGFLENFGEHYHTLCKAVDHLATVDCIFSLAKVAKQGNYCRPTLQEEKKIIIKNGRHPMIDVLLGEQDQFVPNSTSLSDSERVMIITGPNMGGKSSYIKQVTLVTIMAQIGSYVPAEEATIGIVDGIFTRMGAADNIYKGRSTFMEQLTDTAEIIRRASPQSLVILDELGRGTSTHDGIAIAYATLEYFIRDVKSLTLFVTHYPPVCELEKCYPEQVGNYHMGFLVNEDESKQDSGDMEQMPDSVTFLYQITRGIAARSYGLNVAKLADVPREVLQKAAHKSKELEGLVSLRRKRLECFTDLWMTHSVKDLHTWADKLEMEEIQTSLPH.

Low complexity-rich tracts occupy residues 1 to 15 (MPRG…TAAG) and 24 to 40 (LSRF…SASS). The tract at residues 1–84 (MPRGKSASGG…EENISVASHH (84 aa)) is disordered. At Ser33 the chain carries Phosphoserine. The span at 43 to 54 (PAEKVTEGDSRK) shows a compositional bias: basic and acidic residues. 850–857 (GPNMGGKS) contacts ATP.

This sequence belongs to the DNA mismatch repair MutS family. MSH3 subfamily. Component of the DNA mismatch repair (MMR) complex composed at least of MSH2, MSH3, MSH6, PMS1 and MLH1. Heterodimer consisting of MSH2-MSH3 (MutS beta). Forms a ternary complex with MutL alpha (MLH1-PMS1). Interacts with EXO1. Interacts with MCM9.

In terms of biological role, component of the post-replicative DNA mismatch repair system (MMR). Heterodimerizes with MSH2 to form MutS beta which binds to DNA mismatches thereby initiating DNA repair. When bound, the MutS beta heterodimer bends the DNA helix and shields approximately 20 base pairs. MutS beta recognizes large insertion-deletion loops (IDL) up to 13 nucleotides long. After mismatch binding, forms a ternary complex with the MutL alpha heterodimer, which is thought to be responsible for directing the downstream MMR events, including strand discrimination, excision, and resynthesis. The polypeptide is DNA mismatch repair protein Msh3 (Msh3) (Mus musculus (Mouse)).